We begin with the raw amino-acid sequence, 178 residues long: Adenine phosphoribosyltransferase (178 aa).

It belongs to the purine/pyrimidine phosphoribosyltransferase family. As to quaternary structure, homodimer.

It localises to the cytoplasm. The enzyme catalyses AMP + diphosphate = 5-phospho-alpha-D-ribose 1-diphosphate + adenine. It functions in the pathway purine metabolism; AMP biosynthesis via salvage pathway; AMP from adenine: step 1/1. Functionally, catalyzes a salvage reaction resulting in the formation of AMP, that is energically less costly than de novo synthesis. The sequence is that of Adenine phosphoribosyltransferase from Cereibacter sphaeroides (strain ATCC 17029 / ATH 2.4.9) (Rhodobacter sphaeroides).